The primary structure comprises 836 residues: Protein O-mannosyl-transferase TMTC2 (836 aa).

Residues M1–A21 form a helical membrane-spanning segment. The Extracellular segment spans residues D22–P84. Residues W85–F105 form a helical membrane-spanning segment. Residues S106–K107 lie on the Cytoplasmic side of the membrane. Residues I108–I128 traverse the membrane as a helical segment. The Extracellular segment spans residues H129–A132. Residues V133 to L153 traverse the membrane as a helical segment. At C154–R162 the chain is on the cytoplasmic side. Helical transmembrane passes span G163–L184 and W185–F204. Residues H205 to K220 lie on the Cytoplasmic side of the membrane. Residues N221 to A241 form a helical membrane-spanning segment. Residues R242–H312 lie on the Extracellular side of the membrane. The helical transmembrane segment at T313–V333 threads the bilayer. At D334–S399 the chain is on the cytoplasmic side. The helical transmembrane segment at L400–A420 threads the bilayer. Over E421–R422 the chain is Extracellular. A helical transmembrane segment spans residues V423 to Y443. Topologically, residues V444 to R449 are cytoplasmic. A helical transmembrane segment spans residues F450–T470. The Extracellular portion of the chain corresponds to A471 to T836. TPR repeat units follow at residues A493–M526, A527–L560, A561–N594, T606–Q639, Q643–H676, I677–K710, G711–E744, F745–Y778, and P779–D812.

It belongs to the TMTC family.

The protein resides in the membrane. The protein localises to the endoplasmic reticulum. The catalysed reaction is a di-trans,poly-cis-dolichyl beta-D-mannosyl phosphate + L-seryl-[protein] = 3-O-(alpha-D-mannosyl)-L-seryl-[protein] + a di-trans,poly-cis-dolichyl phosphate + H(+). It catalyses the reaction a di-trans,poly-cis-dolichyl beta-D-mannosyl phosphate + L-threonyl-[protein] = 3-O-(alpha-D-mannosyl)-L-threonyl-[protein] + a di-trans,poly-cis-dolichyl phosphate + H(+). The protein operates within protein modification; protein glycosylation. In terms of biological role, transfers mannosyl residues to the hydroxyl group of serine or threonine residues. The 4 members of the TMTC family are O-mannosyl-transferases dedicated primarily to the cadherin superfamily, each member seems to have a distinct role in decorating the cadherin domains with O-linked mannose glycans at specific regions. Also acts as O-mannosyl-transferase on other proteins such as PDIA3. This is Protein O-mannosyl-transferase TMTC2 from Homo sapiens (Human).